Here is a 362-residue protein sequence, read N- to C-terminus: GTP 3',8-cyclase (362 aa).

The region spanning 8–228 (SLGRPLRDLR…ARISSHWPID (221 aa)) is the Radical SAM core domain. Residue Arg-17 coordinates GTP. [4Fe-4S] cluster contacts are provided by Cys-24 and Cys-28. Tyr-30 serves as a coordination point for S-adenosyl-L-methionine. Cys-31 serves as a coordination point for [4Fe-4S] cluster. Arg-71 lines the GTP pocket. Gly-75 is an S-adenosyl-L-methionine binding site. Residue Thr-102 coordinates GTP. Ser-126 contacts S-adenosyl-L-methionine. Residue Lys-164 coordinates GTP. Met-198 is an S-adenosyl-L-methionine binding site. Residues Cys-262 and Cys-265 each contribute to the [4Fe-4S] cluster site. Position 267–269 (267–269 (RLR)) interacts with GTP. Residue Cys-279 coordinates [4Fe-4S] cluster. The tract at residues 325 to 362 (ALDSDGSREDADESEASAVPGRSTHPGHRKVEMSYIGG) is disordered.

It belongs to the radical SAM superfamily. MoaA family. As to quaternary structure, monomer and homodimer. Requires [4Fe-4S] cluster as cofactor.

It carries out the reaction GTP + AH2 + S-adenosyl-L-methionine = (8S)-3',8-cyclo-7,8-dihydroguanosine 5'-triphosphate + 5'-deoxyadenosine + L-methionine + A + H(+). It participates in cofactor biosynthesis; molybdopterin biosynthesis. Catalyzes the cyclization of GTP to (8S)-3',8-cyclo-7,8-dihydroguanosine 5'-triphosphate. This chain is GTP 3',8-cyclase, found in Acidothermus cellulolyticus (strain ATCC 43068 / DSM 8971 / 11B).